We begin with the raw amino-acid sequence, 219 residues long: Protein-L-isoaspartate O-methyltransferase 1 (219 aa).

Residue Ser-67 is part of the active site.

The protein belongs to the methyltransferase superfamily. L-isoaspartyl/D-aspartyl protein methyltransferase family.

It localises to the cytoplasm. The enzyme catalyses [protein]-L-isoaspartate + S-adenosyl-L-methionine = [protein]-L-isoaspartate alpha-methyl ester + S-adenosyl-L-homocysteine. Its function is as follows. Catalyzes the methyl esterification of L-isoaspartyl residues in peptides and proteins that result from spontaneous decomposition of normal L-aspartyl and L-asparaginyl residues. It plays a role in the repair and/or degradation of damaged proteins. In Geotalea uraniireducens (strain Rf4) (Geobacter uraniireducens), this protein is Protein-L-isoaspartate O-methyltransferase 1.